Reading from the N-terminus, the 130-residue chain is Small ribosomal subunit protein uS9 (130 aa).

Belongs to the universal ribosomal protein uS9 family.

The protein is Small ribosomal subunit protein uS9 of Aromatoleum aromaticum (strain DSM 19018 / LMG 30748 / EbN1) (Azoarcus sp. (strain EbN1)).